A 647-amino-acid polypeptide reads, in one-letter code: DNA topoisomerase 3 (647 aa).

One can recognise a Toprim domain in the interval 2-135 (TRLFIAEKPS…KKETVQRLLI (134 aa)). Residues E8, D104, and D106 each contribute to the Mg(2+) site. One can recognise a Topo IA-type catalytic domain in the interval 156–608 (FIPLSVSALA…TLQGRLEQLI (453 aa)). The interaction with DNA stretch occupies residues 195 to 200 (SVGRVQ). The active-site O-(5'-phospho-DNA)-tyrosine intermediate is the Y332.

This sequence belongs to the type IA topoisomerase family. Mg(2+) is required as a cofactor.

The catalysed reaction is ATP-independent breakage of single-stranded DNA, followed by passage and rejoining.. In terms of biological role, releases the supercoiling and torsional tension of DNA, which is introduced during the DNA replication and transcription, by transiently cleaving and rejoining one strand of the DNA duplex. Introduces a single-strand break via transesterification at a target site in duplex DNA. The scissile phosphodiester is attacked by the catalytic tyrosine of the enzyme, resulting in the formation of a DNA-(5'-phosphotyrosyl)-enzyme intermediate and the expulsion of a 3'-OH DNA strand. The free DNA strand then undergoes passage around the unbroken strand, thus removing DNA supercoils. Finally, in the religation step, the DNA 3'-OH attacks the covalent intermediate to expel the active-site tyrosine and restore the DNA phosphodiester backbone. The sequence is that of DNA topoisomerase 3 from Vibrio cholerae serotype O1 (strain ATCC 39315 / El Tor Inaba N16961).